We begin with the raw amino-acid sequence, 284 residues long: Aminoglycoside 6-adenylyltransferase (284 aa).

Homodimer.

Its subcellular location is the cytoplasm. The enzyme catalyses streptomycin + ATP = 6-O-adenylylstreptomycin + diphosphate. The catalysed reaction is streptomycin + GTP = 6-O-guanylylstreptomycin + diphosphate. It carries out the reaction streptidine + ATP = 6-O-adenylylstreptidine + diphosphate. Functionally, mediates bacterial resistance to streptomycin. Adenylates streptomycin on the O-6 residue. Adenylates streptidine on the O-6 residue. Does not act on spectinomycin, neomycin-B or kanamycin. Specific for ATP and GTP nucleotides incorporating a purine ring. No reaction with CTP or UTP. This chain is Aminoglycoside 6-adenylyltransferase, found in Bacillus subtilis (strain 168).